A 195-amino-acid polypeptide reads, in one-letter code: UMP-CMP kinase (195 aa).

An ATP-binding site is contributed by 17-22 (GSGKGT). Residues 37–66 (SAGDLLRQEQQSGSKDGEMIATMIKNGEIV) form an NMP region. A ribonucleoside 5'-phosphate-binding positions include arginine 43, 64–66 (EIV), and 91–94 (GFPR). Residue asparagine 98 participates in CMP binding. An LID region spans residues 131 to 141 (KRGESSGRSDD). Arginine 132 is a binding site for ATP. 2 residues coordinate a ribonucleoside 5'-phosphate: arginine 138 and arginine 149. Arginine 177 lines the ATP pocket.

Belongs to the adenylate kinase family. UMP-CMP kinase subfamily. As to quaternary structure, monomer. Requires Mg(2+) as cofactor.

Its subcellular location is the cytoplasm. The protein localises to the nucleus. The catalysed reaction is CMP + ATP = CDP + ADP. The enzyme catalyses dCMP + ATP = dCDP + ADP. It carries out the reaction UMP + ATP = UDP + ADP. Catalyzes the phosphorylation of pyrimidine nucleoside monophosphates at the expense of ATP. Plays an important role in de novo pyrimidine nucleotide biosynthesis. Has preference for UMP and CMP as phosphate acceptors. This chain is UMP-CMP kinase, found in Dictyostelium discoideum (Social amoeba).